The sequence spans 182 residues: NAD(P)H-quinone oxidoreductase subunit I, chloroplastic (182 aa).

2 4Fe-4S ferredoxin-type domains span residues 55-84 (GRIH…VDWK) and 95-124 (LNYS…MTEE). Residues cysteine 64, cysteine 67, cysteine 70, cysteine 74, cysteine 104, cysteine 107, cysteine 110, and cysteine 114 each coordinate [4Fe-4S] cluster.

This sequence belongs to the complex I 23 kDa subunit family. NDH is composed of at least 16 different subunits, 5 of which are encoded in the nucleus. Requires [4Fe-4S] cluster as cofactor.

The protein resides in the plastid. It localises to the chloroplast thylakoid membrane. It catalyses the reaction a plastoquinone + NADH + (n+1) H(+)(in) = a plastoquinol + NAD(+) + n H(+)(out). The enzyme catalyses a plastoquinone + NADPH + (n+1) H(+)(in) = a plastoquinol + NADP(+) + n H(+)(out). Its function is as follows. NDH shuttles electrons from NAD(P)H:plastoquinone, via FMN and iron-sulfur (Fe-S) centers, to quinones in the photosynthetic chain and possibly in a chloroplast respiratory chain. The immediate electron acceptor for the enzyme in this species is believed to be plastoquinone. Couples the redox reaction to proton translocation, and thus conserves the redox energy in a proton gradient. This chain is NAD(P)H-quinone oxidoreductase subunit I, chloroplastic, found in Buxus microphylla (Littleleaf boxwood).